A 523-amino-acid polypeptide reads, in one-letter code: Nuclear receptor ROR-alpha (523 aa).

The segment covering 1 to 26 (MESAPAAPDPAASEPGSSGSEAAAGS) has biased composition (low complexity). The interval 1–63 (MESAPAAPDP…SRGISVTKKT (63 aa)) is disordered. Lys38 is subject to N6-methyllysine. NR C4-type zinc fingers lie at residues 73 to 93 (CKICGDKSSGIHYGVITCEGC) and 109 to 133 (CPRQKNCLIDRTSRNRCQHCRLQKC). A DNA-binding region (nuclear receptor) is located at residues 73-138 (CKICGDKSSG…RLQKCLAVGM (66 aa)). Residues 154–183 (DSLYAEVQKHRMQQQQRDHQQQPGEAEPLT) are disordered. A Phosphothreonine; by MAPK1 modification is found at Thr183. Lys240 participates in a covalent cross-link: Glycyl lysine isopeptide (Lys-Gly) (interchain with G-Cter in SUMO). The NR LBD domain occupies 272–510 (ELEHLAQNIS…LHFPPLYKEL (239 aa)). Residues 506–511 (LYKELF) carry the AF-2 motif.

Belongs to the nuclear hormone receptor family. NR1 subfamily. Monomer. Interacts (via the DNA-binding domain) with HIF1A; the interaction enhances HIF1A transcription under hypoxia through increasing protein stability. Interacts with CEBPB; the interaction disrupts the interaction CEBPB:EP300. Interacts with the coactivators NCOA2, PPARGC1A (via LXXLL motif), EP300 and MED1. Interacts with the corepressor NCOR1. Interacts with MAGED1 and CTNNB1. Interacts with CRY1 and PER2. Interacts (via AF-2 motif) with PROX1. Interacts with NRIP1. Isoform 4 interacts (via AF-2 motif) with isoform 1 of FOXP3 (via LXXLL motif). Post-translationally, phosphorylation by conventional PKCs in neurons inhibits transcriptional activity. Phosphorylated on Thr-183 by MAPK1/ERK1 in vitro. Sumoylated by SENP1 and SENP2. Sumoylation, promoted by PIAS2, PIAS3, PIAS4 but not PIAS1, enhances the transcriptional activity. Desumoylated by SENP1. In terms of processing, ubiquitinated, leading to its degradation by the proteasome. Proteasomal degradation is required for efficient transcriptional activity and is prevented by HR. Post-translationally, monomethylated at Lys-38 by EZH2, this creates a degron recognized by a DCX (DDB1-DCAF1/VPRBP-CUL4A-RBX1) E3 ubiquitin ligase complex. In terms of tissue distribution, expressed in cerebellum, heart, liver, lung, kidney, retina and brown and white adipose tissues. Expressed in the subset of mature Th17 cells.

It is found in the nucleus. Its function is as follows. Nuclear receptor that binds DNA as a monomer to ROR response elements (RORE) containing a single core motif half-site 5'-AGGTCA-3' preceded by a short A-T-rich sequence. Key regulator of embryonic development, cellular differentiation, immunity, circadian rhythm as well as lipid, steroid, xenobiotics and glucose metabolism. Considered to have intrinsic transcriptional activity, have some natural ligands like oxysterols that act as agonists (25-hydroxycholesterol) or inverse agonists (7-oxygenated sterols), enhancing or repressing the transcriptional activity, respectively. Recruits distinct combinations of cofactors to target genes regulatory regions to modulate their transcriptional expression, depending on the tissue, time and promoter contexts. Regulates genes involved in photoreceptor development including OPN1SW, OPN1SM and ARR3 and skeletal muscle development with MYOD1. Required for proper cerebellum development, regulates SHH gene expression, among others, to induce granule cells proliferation as well as expression of genes involved in calcium-mediated signal transduction. Regulates the circadian expression of several clock genes, including CLOCK, BMAL1, NPAS2 and CRY1. Competes with NR1D1 for binding to their shared DNA response element on some clock genes such as BMAL1, CRY1 and NR1D1 itself, resulting in NR1D1-mediated repression or RORA-mediated activation of clock genes expression, leading to the circadian pattern of clock genes expression. Therefore influences the period length and stability of the clock. Regulates genes involved in lipid metabolism such as apolipoproteins APOA1, APOA5, APOC3 and PPARG. In liver, has specific and redundant functions with RORC as positive or negative modulator of expression of genes encoding phase I and phase II proteins involved in the metabolism of lipids, steroids and xenobiotics, such as CYP7B1 and SULT2A1. Induces a rhythmic expression of some of these genes. In addition, interplays functionally with NR1H2 and NR1H3 for the regulation of genes involved in cholesterol metabolism. Also involved in the regulation of hepatic glucose metabolism through the modulation of G6PC1 and PCK1. In adipose tissue, plays a role as negative regulator of adipocyte differentiation, probably acting through dual mechanisms. May suppress CEBPB-dependent adipogenesis through direct interaction and PPARG-dependent adipogenesis through competition for DNA-binding. Downstream of IL6 and TGFB and synergistically with RORC isoform 2, is implicated in the lineage specification of uncommitted CD4(+) T-helper (T(H)) cells into T(H)17 cells, antagonizing the T(H)1 program. Probably regulates IL17 and IL17F expression on T(H) by binding to the essential enhancer conserved non-coding sequence 2 (CNS2) in the IL17-IL17F locus. Involved in hypoxia signaling by interacting with and activating the transcriptional activity of HIF1A. May inhibit cell growth in response to cellular stress. May exert an anti-inflammatory role by inducing CHUK expression and inhibiting NF-kappa-B signaling. The protein is Nuclear receptor ROR-alpha (Rora) of Mus musculus (Mouse).